Consider the following 860-residue polypeptide: Leucine--tRNA ligase (860 aa).

Positions 42–52 match the 'HIGH' region motif; that stretch reads PYPSGRLHMGH. The short motif at 619 to 623 is the 'KMSKS' region element; the sequence is KMSKS. Lys622 contacts ATP.

Belongs to the class-I aminoacyl-tRNA synthetase family.

The protein localises to the cytoplasm. It carries out the reaction tRNA(Leu) + L-leucine + ATP = L-leucyl-tRNA(Leu) + AMP + diphosphate. The polypeptide is Leucine--tRNA ligase (Escherichia coli (strain SMS-3-5 / SECEC)).